The chain runs to 158 residues: Transcription elongation factor GreA (158 aa).

Residues 3 to 75 (TEKTYPMTQE…TQLENMIRNA (73 aa)) adopt a coiled-coil conformation.

It belongs to the GreA/GreB family.

In terms of biological role, necessary for efficient RNA polymerase transcription elongation past template-encoded arresting sites. The arresting sites in DNA have the property of trapping a certain fraction of elongating RNA polymerases that pass through, resulting in locked ternary complexes. Cleavage of the nascent transcript by cleavage factors such as GreA or GreB allows the resumption of elongation from the new 3'terminus. GreA releases sequences of 2 to 3 nucleotides. This Bacillus cytotoxicus (strain DSM 22905 / CIP 110041 / 391-98 / NVH 391-98) protein is Transcription elongation factor GreA.